Consider the following 626-residue polypeptide: uncharacterized protein (626 aa).

This is an uncharacterized protein from Dictyostelium discoideum (Social amoeba).